Reading from the N-terminus, the 558-residue chain is Acid-sensing ion channel 4-B (558 aa).

Topologically, residues 1-71 are cytoplasmic; that stretch reads MPIEFVCKIK…TSERLGFRQT (71 aa). The chain crosses the membrane as a helical span at residues 72–92; it reads LWGLALLVSLGLFLYQATWSA. Residues 93 to 433 lie on the Extracellular side of the membrane; it reads ATYLERPHLA…ETIEQKKAYD (341 aa). Intrachain disulfides connect cysteine 120-cysteine 204 and cysteine 182-cysteine 189. Residues asparagine 140, asparagine 183, asparagine 188, asparagine 210, and asparagine 245 are each glycosylated (N-linked (GlcNAc...) asparagine). Intrachain disulfides connect cysteine 298–cysteine 373, cysteine 317–cysteine 369, cysteine 321–cysteine 367, cysteine 330–cysteine 351, and cysteine 332–cysteine 344. N-linked (GlcNAc...) asparagine glycosylation occurs at asparagine 374. The chain crosses the membrane as a helical span at residues 434–454; the sequence is IAGLLGDIGGQMGLFIGASIL. A GAS motif; ion selectivity filter motif is present at residues 450-452; that stretch reads GAS. Residues 455 to 558 are Cytoplasmic-facing; the sequence is TILEILDYIY…QQAVQQDFAC (104 aa).

It belongs to the amiloride-sensitive sodium channel (TC 1.A.6) family. ASIC4 subfamily. As to quaternary structure, homotrimer. Heterotrimer; with other ASIC proteins producing functional channels. In terms of tissue distribution, expressed in central nervous system.

The protein localises to the cell membrane. The catalysed reaction is Na(+)(in) = Na(+)(out). Does not exhibit measurable stand-alone pH-gated sodium channel activity but may form pH-gated heterotrimeric sodium channels. This is Acid-sensing ion channel 4-B from Danio rerio (Zebrafish).